Consider the following 303-residue polypeptide: Vacuolar protein sorting-associated protein 26B (303 aa).

This sequence belongs to the VPS26 family. In terms of assembly, component of the retromer complex which consists of VPS29 (MAG1), VPS26 (VPS26A or VPS26B), VPS35 (VPS35A or VPS35B or VPS35C), VPS5/17 (SNX1 or SNX2A or SNX2B). Component of a retromer subcomplex consisting of VPS29 (MAG1), VPS26 (VPS26A or VPS26B), VPS35 (VPS35A or VPS35B or VPS35C).

The protein localises to the cytoplasm. It is found in the endosome membrane. It localises to the prevacuolar compartment membrane. Its subcellular location is the golgi apparatus. The protein resides in the trans-Golgi network membrane. Its function is as follows. Plays a role in vesicular protein sorting. Component of the membrane-associated retromer complex which is essential in endosome-to-Golgi retrograde transport. The VPS29-VPS26-VPS35 subcomplex may be involved in recycling of specific cargos from endosome to the plasma membrane. The chain is Vacuolar protein sorting-associated protein 26B (VPS26B) from Arabidopsis thaliana (Mouse-ear cress).